Here is a 477-residue protein sequence, read N- to C-terminus: MAGSHAGTLRVLQAVDTELTADSVEWCPVEGYQHLLACGTYQLRAPRDQPALDGSEPQVRLGRLYLFSFSEHNTAKPLLEVQRRDSSAVLDMKWCHIPVSGHVLLGLANASGSIGLLRLMECENNSYTLQPISSLALDENCLSLSMDWSTGKSVRAREQPLKIISSDSKGQLHLLMVNEGTAELQLVASWPAHHFEAWIAAFNYWQTELVYSGGDDCLLRGWDTRMLGTPVFTSKRHCMGVCSIQSSPHQEHILATGSYDEHVLLWDTRNIRQPLADVPVQGGVWRLKWHPVHHHLLLAACMHNGFKILNCQKAIEEKQDITVLTSHEMPNSLVYGADWSWLFHSMKPTPTWFFDQNDMGVKAADHSSLKVTEEPPIHSQEQTMDRQVEGPANAHTRAELKASLLPLTEDMKNSKDCSSSSVKTRDLSHCSGGQSFDNSLLATCSFYDHVLHLWKWETNQARTLCSGTGCDLGSADH.

WD repeat units follow at residues 194-232 (HFEA…TPVF), 236-276 (RHCM…QPLA), and 422-464 (VKTR…ARTL).

The protein belongs to the DPH7 family. Interacts with INCA1.

It carries out the reaction diphthine methyl ester-[translation elongation factor 2] + H2O = diphthine-[translation elongation factor 2] + methanol + H(+). It functions in the pathway protein modification; peptidyl-diphthamide biosynthesis. In terms of biological role, catalyzes the demethylation of diphthine methyl ester to form diphthine, an intermediate diphthamide biosynthesis, a post-translational modification of histidine which occurs in translation elongation factor 2 (EEF2). This chain is Diphthine methyltransferase (Dph7), found in Mus musculus (Mouse).